The following is a 414-amino-acid chain: MAKNPKILSIVLAGGEGTRLMPLTRDRAKPAVPFGGVFRLIDFPLSNLVNSGYMQTVVLTQYKSHSLDRHISTVWRFSPLLGNYVSPVPAQQRLGKHWYLGSADAIYQTINIIEDVQPDIVVIVGADHVYRMDFQQMVQQHIESGAEFTVAGIRQPISQSNQFGVIEVDPDHPNMIKSFQEKPQTTTGLPDDPNSILASMGNYVANTDALFAALSLDEKAEDTKHDMGGDIAPYFAARNEAGVYDFNSNEIPGATPTDHAYWRDVGTLKQFYDAHMDLISYVPEFNLYNTEWPIYTLSGNLPPAKFVHAGRDRLGHATDSIVSPGVIVSGGEVHHSVLSPNVRIHSWSQVVDSILFDGVVVNRRARVYKAILDKNVVLTENSTVGIDTEHDLARGFTVTPEGITVVPKGTVVDD.

Alpha-D-glucose 1-phosphate contacts are provided by residues tyrosine 99, glycine 164, 181–182 (EK), and serine 199.

This sequence belongs to the bacterial/plant glucose-1-phosphate adenylyltransferase family. Homotetramer.

The enzyme catalyses alpha-D-glucose 1-phosphate + ATP + H(+) = ADP-alpha-D-glucose + diphosphate. Its pathway is glycan biosynthesis; glycogen biosynthesis. Its function is as follows. Involved in the biosynthesis of ADP-glucose, a building block required for the elongation reactions to produce glycogen. Catalyzes the reaction between ATP and alpha-D-glucose 1-phosphate (G1P) to produce pyrophosphate and ADP-Glc. This is Glucose-1-phosphate adenylyltransferase from Bifidobacterium adolescentis (strain ATCC 15703 / DSM 20083 / NCTC 11814 / E194a).